A 964-amino-acid chain; its full sequence is Integrator complex subunit 4 (964 aa).

Position 27 is an N6-acetyllysine (Lys-27). HEAT repeat units lie at residues Ala-67–Phe-106, Gln-146–Ser-184, Gly-191–Lys-229, Leu-230–Tyr-264, Ile-278–Ser-314, Asn-370–Ser-406, Pro-407–Leu-445, and Glu-447–Leu-485. A Glycyl lysine isopeptide (Lys-Gly) (interchain with G-Cter in SUMO1); alternate cross-link involves residue Lys-792. Lys-792 is covalently cross-linked (Glycyl lysine isopeptide (Lys-Gly) (interchain with G-Cter in SUMO2); alternate).

This sequence belongs to the Integrator subunit 4 family. As to quaternary structure, component of the Integrator complex, composed of core subunits INTS1, INTS2, INTS3, INTS4, INTS5, INTS6, INTS7, INTS8, INTS9/RC74, INTS10, INTS11/CPSF3L, INTS12, INTS13, INTS14 and INTS15. The core complex associates with protein phosphatase 2A subunits PPP2CA and PPP2R1A, to form the Integrator-PP2A (INTAC) complex. INTS4 is part of the RNA endonuclease subcomplex, composed of INTS4, INTS9, INTS11 and inositol hexakisphosphate (InsP6). Interacts with BRAT1; interaction is required for the assembly of the RNA endonuclease subcomplex.

It is found in the nucleus. The protein resides in the cytoplasm. Its function is as follows. Component of the integrator complex, a multiprotein complex that terminates RNA polymerase II (Pol II) transcription in the promoter-proximal region of genes. The integrator complex provides a quality checkpoint during transcription elongation by driving premature transcription termination of transcripts that are unfavorably configured for transcriptional elongation: the complex terminates transcription by (1) catalyzing dephosphorylation of the C-terminal domain (CTD) of Pol II subunit POLR2A/RPB1 and SUPT5H/SPT5, (2) degrading the exiting nascent RNA transcript via endonuclease activity and (3) promoting the release of Pol II from bound DNA. The integrator complex is also involved in terminating the synthesis of non-coding Pol II transcripts, such as enhancer RNAs (eRNAs), small nuclear RNAs (snRNAs), telomerase RNAs and long non-coding RNAs (lncRNAs). Within the integrator complex, INTS4 acts as an scaffold that links INTS9 and INTS11. Mediates recruitment of cytoplasmic dynein to the nuclear envelope, probably as component of the integrator complex. This is Integrator complex subunit 4 (Ints4) from Mus musculus (Mouse).